Reading from the N-terminus, the 331-residue chain is ADP-L-glycero-D-manno-heptose-6-epimerase (331 aa).

Residues 11 to 12 (FI), 32 to 33 (DN), Lys39, Lys54, 75 to 79 (EGACS), and Asn92 contribute to the NADP(+) site. Catalysis depends on Tyr139, which acts as the Proton acceptor. Lys143 provides a ligand contact to NADP(+). Asn168 provides a ligand contact to substrate. 2 residues coordinate NADP(+): Val169 and Lys177. Catalysis depends on Lys177, which acts as the Proton acceptor. Substrate-binding positions include Arg179, His186, 200–203 (FGEY), Arg213, and Tyr292.

The protein belongs to the NAD(P)-dependent epimerase/dehydratase family. HldD subfamily. In terms of assembly, homopentamer. The cofactor is NADP(+).

The enzyme catalyses ADP-D-glycero-beta-D-manno-heptose = ADP-L-glycero-beta-D-manno-heptose. Its pathway is nucleotide-sugar biosynthesis; ADP-L-glycero-beta-D-manno-heptose biosynthesis; ADP-L-glycero-beta-D-manno-heptose from D-glycero-beta-D-manno-heptose 7-phosphate: step 4/4. Catalyzes the interconversion between ADP-D-glycero-beta-D-manno-heptose and ADP-L-glycero-beta-D-manno-heptose via an epimerization at carbon 6 of the heptose. The polypeptide is ADP-L-glycero-D-manno-heptose-6-epimerase (Cupriavidus metallidurans (strain ATCC 43123 / DSM 2839 / NBRC 102507 / CH34) (Ralstonia metallidurans)).